The chain runs to 230 residues: Sodium channel modifier 1 (230 aa).

Phosphoserine is present on Ser2. The short motif at 4-20 (KREGDDWSQLNVLKKRR) is the Bipartite nuclear localization signal element. The segment at 42-74 (FACAICPHRPVLDTLAMLTAHRAGKKHLSSLQL) adopts a Matrin-type zinc-finger fold. Lys67 is covalently cross-linked (Glycyl lysine isopeptide (Lys-Gly) (interchain with G-Cter in SUMO2)). 2 disordered regions span residues 76-106 (YGKK…EAPL) and 129-191 (RRKY…RALD). The segment covering 89–100 (PRQHNELRREET) has biased composition (basic and acidic residues). Positions 142 to 151 (SRPPLPPPEV) are enriched in pro residues. Residues 167 to 180 (GSQTKESATVSSPA) show a composition bias toward polar residues. Ser183 and Ser219 each carry phosphoserine. Positions 188 to 230 (RALDHYLTLRSSGWIPDGRGRWIKDENVEFDSDEEEPPDLPLD) are required for interaction with LUC7L2.

In terms of assembly, component of the minor spliceosome. Within this complex, interacts with RNF113A, as well as with SF3B1/SF3b155, SF3B2/SF3b145, SF3B3/SF3b130 and CDC5L. May interact with LUC7L2 and SNRNP70.

It is found in the nucleus. The protein resides in the nucleoplasm. Its subcellular location is the nucleus speckle. In terms of biological role, as a component of the minor spliceosome, involved in the splicing of U12-type introns in pre-mRNAs. Plays a role in the regulation of primary cilia length and Hedgehog signaling. This chain is Sodium channel modifier 1 (SCNM1), found in Bos taurus (Bovine).